The following is a 202-amino-acid chain: Holliday junction branch migration complex subunit RuvA (202 aa).

The interval 1–65 (MIAYVEGRLA…EDALELYGFA (65 aa)) is domain I. Residues 66-144 (TWDERQTFIV…VEDLPAAAPL (79 aa)) are domain II. The segment at 145-155 (VTGGAPGGVFR) is flexible linker. The tract at residues 155 to 202 (RDALAGLANLGYGEEEASHVLKEVLHGEPDLDVGGALRAALRALARGR) is domain III.

It belongs to the RuvA family. As to quaternary structure, homotetramer. Forms an RuvA(8)-RuvB(12)-Holliday junction (HJ) complex. HJ DNA is sandwiched between 2 RuvA tetramers; dsDNA enters through RuvA and exits via RuvB. An RuvB hexamer assembles on each DNA strand where it exits the tetramer. Each RuvB hexamer is contacted by two RuvA subunits (via domain III) on 2 adjacent RuvB subunits; this complex drives branch migration. In the full resolvosome a probable DNA-RuvA(4)-RuvB(12)-RuvC(2) complex forms which resolves the HJ.

Its subcellular location is the cytoplasm. Functionally, the RuvA-RuvB-RuvC complex processes Holliday junction (HJ) DNA during genetic recombination and DNA repair, while the RuvA-RuvB complex plays an important role in the rescue of blocked DNA replication forks via replication fork reversal (RFR). RuvA specifically binds to HJ cruciform DNA, conferring on it an open structure. The RuvB hexamer acts as an ATP-dependent pump, pulling dsDNA into and through the RuvAB complex. HJ branch migration allows RuvC to scan DNA until it finds its consensus sequence, where it cleaves and resolves the cruciform DNA. The protein is Holliday junction branch migration complex subunit RuvA of Nitratidesulfovibrio vulgaris (strain DP4) (Desulfovibrio vulgaris).